We begin with the raw amino-acid sequence, 783 residues long: MPDVLSNDLLQKMDAYWRAANYLSVGQIYLQDNPLLDQKLQLDHIKPRLLGHWGTTPGLNLLYVHLNRLITEHDLDMIYITGPGHGGPGLVANAYLEGTYTERYPAIERSRNGMQRLFRQFSWPHGVPSHVSPETPGSIHEGGELGYSLAHAYGAAFDNPNLIVACVVGDGEAETGALATSWHSNKFLNPARDGAVLPILHLNGFKIANPTVLARITPQELTDLMRGYGYEPHFVEGDDPAVVHQTLAATLERVLGEIRAIQDKARNHGDTERPRWPMIVMRTPKGWTGPKQVDGKPVEGTWRAHQVPIADFKNPEHLTLLEDWMRSYRPDELFDATGKLRDELQALAPTGRRRMSANPHANGGELLEPLSLPDFHDYAVTLTGPGALKAEATRVLGTFLRDVMKNSLESENFRLFGPDETASNRLDAVLQVSPKEWMAAIEDVDVDLSPDGRVMEVLSEHLCQGWLEGYLLTGRHGFFSCYEAFIHIIDSMFNQHAKWLKACATIPWRKPIASLNYLLTSHVWRQDHNGFSHQDPGFIDHVANKKSNVVRIYLPPDANCLLSVADHCLRSRNYVNLIVAGKQPEWQWLDIDAAVRHCTTGAGIWHWASDEGEPDVVMACAGDVPTVETLAAVKLLREYVPDIKIRVVNVVDLMVLQPSSEHPHGLDDRRFDELFTTDKPVIFAFHGYPWLIHRLTYRRRNHVNIHVRGYKEEGTTTTPFDMVVLNDLDRYRLALDAILRIPRLADQRDAATSRYWATMQRHKLYIGEHGDDLPEVRDWRWSA.

The protein belongs to the XFP family. Thiamine diphosphate serves as cofactor.

The polypeptide is Probable phosphoketolase (Rhodopseudomonas palustris (strain TIE-1)).